We begin with the raw amino-acid sequence, 1151 residues long: Calcium-activated potassium channel subunit alpha-1 (1151 aa).

A disordered region spans residues 1–36 (MSSNIHANHLSLDASSSSSSSSSSSSSSSSSSSVHE). At 1-59 (MSSNIHANHLSLDASSSSSSSSSSSSSSSSSSSVHEPKMDALIIPVTMEVPCDSRGQRM) the chain is on the extracellular side. Residues 15–33 (SSSSSSSSSSSSSSSSSSS) show a composition bias toward low complexity. Residues 60 to 80 (WWAFLASSMVTFFGGLFIILL) form a helical membrane-spanning segment. Topologically, residues 81-151 (WRTLKYLWTV…MISAQTLTGR (71 aa)) are cytoplasmic. 3 S-palmitoyl cysteine lipidation sites follow: C91, C92, and C94. Residues 152–172 (VLVVLVFALSIGALVIYFIDS) traverse the membrane as a helical segment. Topologically, residues 173-187 (SNPIESCQNFYKDFT) are extracellular. A helical transmembrane segment spans residues 188 to 208 (LQIDMAFNVFFLLYFGLRFIA). Over 209 to 212 (ANDK) the chain is Cytoplasmic. Residues 213–233 (LWFWLEVNSVVDFFTVPPVFV) traverse the membrane as a helical segment. The Extracellular segment spans residues 234 to 237 (SVYL). A helical; Voltage-sensor transmembrane segment spans residues 238–258 (NRSWLGLRFLRALRLIQFSEI). Topologically, residues 259 to 273 (LQFLNILKTSNSIKL) are cytoplasmic. The chain crosses the membrane as a helical span at residues 274-294 (VNLLSIFISTWLTAAGFIHLV). Residues 295–308 (ENSGDPWENFQNNQ) lie on the Extracellular side of the membrane. Positions 309 to 331 (ALTYWECVYLLMVTMSTVGYGDV) form an intramembrane region, pore-forming. The short motif at 325–328 (TVGY) is the Selectivity for potassium element. Over 332 to 340 (YAKTTLGRL) the chain is Extracellular. Residues 341-361 (FMVFFILGGLAMFASYVPEII) form a helical membrane-spanning segment. Residues 362–1151 (ELIGNRKKYG…KQKYVQEERL (790 aa)) are Cytoplasmic-facing. The RCK N-terminal 1 domain maps to 380 to 522 (RKHIVVCGHI…WNWKEGDDAI (143 aa)). Mg(2+)-binding residues include E412, Q435, and E437. A segment S7 region spans residues 529-549 (LGFIAQSCLAQGLSTMLANLF). The segment S8 stretch occupies residues 586–606 (LSFPTVCELCFVKLKLLMIAI). Residues 650 to 654 (CKACH) are heme-binding motif. Residues 674–702 (EQPSTLSPKKKQRNGGMRNSPNSSPKLMR) are disordered. T678 carries the post-translational modification Phosphothreonine. A phosphoserine mark is found at S680, S693, and S697. The segment at 752-772 (VLSGHVVVCIFGDVSSALIGL) is segment S9. The region spanning 754–898 (SGHVVVCIFG…MDRSSPDNSP (145 aa)) is the RCK N-terminal 2 domain. T885 carries the phosphothreonine modification. S893 and S897 each carry phosphoserine. Positions 918-940 (TELVNDTNVQFLDQDDDDDPDTE) match the Calcium bowl motif. Residues Q927, D930, D933, and D935 each coordinate Ca(2+). The interval 947–967 (FACGTAFAVSVLDSLMSATYF) is segment S10. Low complexity predominate over residues 1101-1126 (RASLSHSSHSSQSSSKKSSSVHSIPS). Residues 1101–1151 (RASLSHSSHSSQSSSKKSSSVHSIPSTANRQNRPKSRESRDKQKYVQEERL) are disordered. Positions 1135–1151 (KSRESRDKQKYVQEERL) are enriched in basic and acidic residues. S1136 and S1139 each carry phosphoserine.

It belongs to the potassium channel family. Calcium-activated (TC 1.A.1.3) subfamily. KCa1.1/KCNMA1 sub-subfamily. Homotetramer; which constitutes the calcium-activated potassium channel. Interacts with beta subunits KCNMB1, KCNMB2, KCNMB3 and KCNMB4. Interacts with gamma subunits LRRC26, LRRC38, LRRC52 and LRRC55. Beta and gamma subunits are accessory, and modulate its activity. Interacts with RAB11B. Post-translationally, phosphorylated. Phosphorylation by kinases such as PKA and/or PKG. In smooth muscles, phosphorylation affects its activity. In terms of processing, palmitoylation by ZDHHC22 and ZDHHC23 within the intracellular linker between the S0 and S1 transmembrane domains regulates localization to the plasma membrane. Depalmitoylated by LYPLA1 and LYPLAL1, leading to retard exit from the trans-Golgi network.

It localises to the cell membrane. It catalyses the reaction K(+)(in) = K(+)(out). Its activity is regulated as follows. Ethanol and carbon monoxide-bound heme increase channel activation. Heme inhibits channel activation. Its function is as follows. Potassium channel activated by both membrane depolarization or increase in cytosolic Ca(2+) that mediates export of K(+). It is also activated by the concentration of cytosolic Mg(2+). Its activation dampens the excitatory events that elevate the cytosolic Ca(2+) concentration and/or depolarize the cell membrane. It therefore contributes to repolarization of the membrane potential. Plays a key role in controlling excitability in a number of systems, such as regulation of the contraction of smooth muscle, the tuning of hair cells in the cochlea, regulation of transmitter release, and innate immunity. In smooth muscles, its activation by high level of Ca(2+), caused by ryanodine receptors in the sarcoplasmic reticulum, regulates the membrane potential. In cochlea cells, its number and kinetic properties partly determine the characteristic frequency of each hair cell and thereby helps to establish a tonotopic map. Kinetics of KCNMA1 channels are determined by alternative splicing, phosphorylation status and its combination with modulating beta subunits. Highly sensitive to both iberiotoxin (IbTx) and charybdotoxin (CTX). This Macaca mulatta (Rhesus macaque) protein is Calcium-activated potassium channel subunit alpha-1 (KCNMA1).